The primary structure comprises 384 residues: L-type lectin-like domain-containing protein C4F6.05c (384 aa).

An N-terminal signal peptide occupies residues 1-19; the sequence is MKFCSLFHVLSFCCTLAYA. An L-type lectin-like domain is found at 20–224; it reads VPKSQFLQLH…DLVALSNLNI (205 aa). Over 20-353 the chain is Extracellular; it reads VPKSQFLQLH…AMGNAYSPYN (334 aa). The interval 227–251 is disordered; that stretch reads PDTSNNENLNPTSNTKQSVGDNTSP. A helical membrane pass occupies residues 354 to 374; that stretch reads LTNFMVFLLLGAIVSYGIMLV. The Cytoplasmic segment spans residues 375 to 384; sequence RRDRRRHKYL.

The protein localises to the membrane. The protein resides in the endoplasmic reticulum. It is found in the golgi apparatus. The polypeptide is L-type lectin-like domain-containing protein C4F6.05c (Schizosaccharomyces pombe (strain 972 / ATCC 24843) (Fission yeast)).